We begin with the raw amino-acid sequence, 244 residues long: Phosphoribosyl isomerase A (244 aa).

Residue D10 is the Proton acceptor of the active site. D129 (proton donor) is an active-site residue.

The protein belongs to the HisA/HisF family.

It localises to the cytoplasm. It catalyses the reaction 1-(5-phospho-beta-D-ribosyl)-5-[(5-phospho-beta-D-ribosylamino)methylideneamino]imidazole-4-carboxamide = 5-[(5-phospho-1-deoxy-D-ribulos-1-ylimino)methylamino]-1-(5-phospho-beta-D-ribosyl)imidazole-4-carboxamide. The catalysed reaction is N-(5-phospho-beta-D-ribosyl)anthranilate = 1-(2-carboxyphenylamino)-1-deoxy-D-ribulose 5-phosphate. The protein operates within amino-acid biosynthesis; L-histidine biosynthesis; L-histidine from 5-phospho-alpha-D-ribose 1-diphosphate: step 4/9. It participates in amino-acid biosynthesis; L-tryptophan biosynthesis; L-tryptophan from chorismate: step 3/5. Functionally, involved in both the histidine and tryptophan biosynthetic pathways. The polypeptide is Phosphoribosyl isomerase A (priA) (Mycobacterium tuberculosis (strain CDC 1551 / Oshkosh)).